Consider the following 179-residue polypeptide: ATP synthase subunit delta (179 aa).

The protein belongs to the ATPase delta chain family. F-type ATPases have 2 components, F(1) - the catalytic core - and F(0) - the membrane proton channel. F(1) has five subunits: alpha(3), beta(3), gamma(1), delta(1), epsilon(1). F(0) has three main subunits: a(1), b(2) and c(10-14). The alpha and beta chains form an alternating ring which encloses part of the gamma chain. F(1) is attached to F(0) by a central stalk formed by the gamma and epsilon chains, while a peripheral stalk is formed by the delta and b chains.

The protein resides in the cell membrane. In terms of biological role, f(1)F(0) ATP synthase produces ATP from ADP in the presence of a proton or sodium gradient. F-type ATPases consist of two structural domains, F(1) containing the extramembraneous catalytic core and F(0) containing the membrane proton channel, linked together by a central stalk and a peripheral stalk. During catalysis, ATP synthesis in the catalytic domain of F(1) is coupled via a rotary mechanism of the central stalk subunits to proton translocation. Functionally, this protein is part of the stalk that links CF(0) to CF(1). It either transmits conformational changes from CF(0) to CF(1) or is implicated in proton conduction. The polypeptide is ATP synthase subunit delta (Clostridium botulinum (strain Kyoto / Type A2)).